The chain runs to 118 residues: MSRVKRGVTARARHKKVLNQAKGYYGARSRVYRVAKQAVIKAGQYAYRDRKVKKRTFRSLWIVRINAAARQHDISYSQLINGLNKVGVELDRKALAELAVYNKDAFAAVVEKAKAALA.

The protein belongs to the bacterial ribosomal protein bL20 family.

Functionally, binds directly to 23S ribosomal RNA and is necessary for the in vitro assembly process of the 50S ribosomal subunit. It is not involved in the protein synthesizing functions of that subunit. This is Large ribosomal subunit protein bL20 from Francisella tularensis subsp. tularensis (strain FSC 198).